The sequence spans 456 residues: tRNA modification GTPase MnmE (456 aa).

Positions 24, 81, and 120 each coordinate (6S)-5-formyl-5,6,7,8-tetrahydrofolate. Positions 216-379 (GMTVVIAGRP…LREHLKACMG (164 aa)) constitute a TrmE-type G domain. Position 226 (Asn-226) interacts with K(+). Residues 226 to 231 (NAGKSS), 245 to 251 (TEIAGTT), 270 to 273 (DTAG), 335 to 338 (NKAD), and 359 to 361 (SAR) each bind GTP. Ser-230 is a binding site for Mg(2+). Thr-245, Ile-247, and Thr-250 together coordinate K(+). Residue Thr-251 participates in Mg(2+) binding. Lys-456 provides a ligand contact to (6S)-5-formyl-5,6,7,8-tetrahydrofolate.

Belongs to the TRAFAC class TrmE-Era-EngA-EngB-Septin-like GTPase superfamily. TrmE GTPase family. In terms of assembly, homodimer. Heterotetramer of two MnmE and two MnmG subunits. It depends on K(+) as a cofactor.

It is found in the cytoplasm. In terms of biological role, exhibits a very high intrinsic GTPase hydrolysis rate. Involved in the addition of a carboxymethylaminomethyl (cmnm) group at the wobble position (U34) of certain tRNAs, forming tRNA-cmnm(5)s(2)U34. The chain is tRNA modification GTPase MnmE from Pseudomonas savastanoi pv. phaseolicola (strain 1448A / Race 6) (Pseudomonas syringae pv. phaseolicola (strain 1448A / Race 6)).